A 169-amino-acid polypeptide reads, in one-letter code: Cell division inhibitor SulA (169 aa).

Residues 106–112 form a ftsZ binding region; it reads ALRTGNY. The segment at 162-169 is lon protease binding; sequence KIHSNLYH.

Belongs to the SulA family. Interacts with FtsZ. In terms of processing, is rapidly cleaved and degraded by the Lon protease once DNA damage is repaired.

Its function is as follows. Component of the SOS system and an inhibitor of cell division. Accumulation of SulA causes rapid cessation of cell division and the appearance of long, non-septate filaments. In the presence of GTP, binds a polymerization-competent form of FtsZ in a 1:1 ratio, thus inhibiting FtsZ polymerization and therefore preventing it from participating in the assembly of the Z ring. This mechanism prevents the premature segregation of damaged DNA to daughter cells during cell division. This Shigella boydii serotype 4 (strain Sb227) protein is Cell division inhibitor SulA.